We begin with the raw amino-acid sequence, 232 residues long: Clarin-2 (232 aa).

A helical membrane pass occupies residues 10–30 (YGLASLLSFSSFILIIVALVV). N-linked (GlcNAc...) asparagine glycosylation occurs at Asn-48. The next 3 membrane-spanning stretches (helical) occupy residues 101–121 (ILLL…FAIL), 139–159 (LWNV…VAAV), and 188–208 (SFWI…VVAI).

It belongs to the clarin family.

It is found in the cell projection. The protein localises to the stereocilium membrane. In terms of biological role, plays a key role to hearing function. Required for normal organization and maintenance of the stereocilia bundle and for mechano-electrical transduction. The protein is Clarin-2 of Homo sapiens (Human).